Reading from the N-terminus, the 708-residue chain is Matrix metalloproteinase-9 (708 aa).

Positions 1–19 (MSPWQPLLLVLLALGYSFA) are cleaved as a signal peptide. Residues 20 to 107 (APHQRQPTYV…PRCGVPDVGK (88 aa)) constitute a propeptide, activation peptide. A glycan (N-linked (GlcNAc...) asparagine) is linked at Asn-39. The Cysteine switch signature appears at 98–105 (PRCGVPDV). Position 100 (Cys-100) interacts with Zn(2+). N-linked (GlcNAc...) asparagine glycosylation occurs at Asn-121. Asp-132 and Asp-166 together coordinate Ca(2+). Zn(2+) contacts are provided by His-176 and Asp-178. The Ca(2+) site is built by Asp-183, Gly-184, Asp-186, and Leu-188. His-191 lines the Zn(2+) pocket. Ca(2+) contacts are provided by Gly-198, Gln-200, and Asp-202. Zn(2+) is bound at residue His-204. Positions 206, 207, and 209 each coordinate Ca(2+). Fibronectin type-II domains lie at 226-274 (ANGA…FCPS), 284-332 (GDGK…FCPT), and 343-391 (SAGE…FCPD). 6 disulfides stabilise this stretch: Cys-231-Cys-257, Cys-245-Cys-272, Cys-289-Cys-315, Cys-303-Cys-330, Cys-348-Cys-374, and Cys-362-Cys-389. His-402 is a Zn(2+) binding site. Glu-403 is a catalytic residue. Residues His-406 and His-412 each coordinate Zn(2+). The disordered stretch occupies residues 441–520 (HHLYGRGSKP…SSTPDDNPCN (80 aa)). Residues 480–490 (PTGGPTVAPTG) show a composition bias toward low complexity. Residues 491-502 (APSPGPTGPPTA) show a composition bias toward pro residues. Cys-519 and Cys-707 are oxidised to a cystine. Hemopexin repeat units follow at residues 521 to 566 (VDVF…WPAF), 567 to 611 (PSKL…GLGS), 613 to 660 (VTLV…FSGV), and 661 to 707 (PWNS…LLQC).

The protein belongs to the peptidase M10A family. In terms of assembly, exists as monomer or homodimer; disulfide-linked. Also exists as heterodimer with LCN2. Macrophages and transformed cell lines produce only the monomeric form. Interacts with ECM1. Zn(2+) serves as cofactor. Requires Ca(2+) as cofactor. Post-translationally, N- and O-glycosylated.

The protein resides in the secreted. The protein localises to the extracellular space. It is found in the extracellular matrix. The catalysed reaction is Cleavage of gelatin types I and V and collagen types IV and V.. Matrix metalloproteinase that plays an essential role in local proteolysis of the extracellular matrix and in leukocyte migration. Could play a role in bone osteoclastic resorption. Cleaves KiSS1 at a Gly-|-Leu bond. Cleaves NINJ1 to generate the Secreted ninjurin-1 form. Cleaves type IV and type V collagen into large C-terminal three quarter fragments and shorter N-terminal one quarter fragments. Degrades fibronectin but not laminin or Pz-peptide. In Rattus norvegicus (Rat), this protein is Matrix metalloproteinase-9 (Mmp9).